Here is a 985-residue protein sequence, read N- to C-terminus: Regulator of telomere elongation helicase 1 homolog (985 aa).

In terms of domain architecture, Helicase ATP-binding spans 7–303; it reads AGIPVHFPFE…QDMAGDEPKD (297 aa). 42–49 is an ATP binding site; that stretch reads SPTGTGKT. The [4Fe-4S] cluster site is built by C146, C164, C173, and C209. A DEAH box motif is present at residues 252–255; sequence DEAH. The tract at residues 863 to 883 is disordered; that stretch reads VKIHKRERSSPTAPESSSQVT. Over residues 872-882 the composition is skewed to polar residues; sequence SPTAPESSSQV. A Phosphothreonine modification is found at T874.

The protein belongs to the helicase family. RAD3/XPD subfamily. In terms of tissue distribution, expressed in both male germline and somatic cells (at protein level). Expressed in ovarian germline stem cells (at protein level). Expressed in adult testes (at protein level). Expressed in the germarium including germline stem cells.

It localises to the nucleus. The protein localises to the chromosome. It carries out the reaction ATP + H2O = ADP + phosphate + H(+). Functionally, a probable ATP-dependent DNA helicase implicated in DNA repair and the maintenance of genomic stability. Acts as an anti-recombinase to counteract toxic recombination and limit crossover during meiosis. Regulates meiotic recombination and crossover homeostasis by physically dissociating strand invasion events and thereby promotes noncrossover repair by meiotic synthesis dependent strand annealing (SDSA) as well as disassembly of D loop recombination intermediates. In male germline stem cells (GSCs), plays a role in GSCs maintenance during larval germline development by modulating the expression of genes such as Stat92E and preventing DNA damage-induced checkpoint activation. May play a role in female germline stem cell maintenance. The polypeptide is Regulator of telomere elongation helicase 1 homolog (Drosophila melanogaster (Fruit fly)).